A 469-amino-acid chain; its full sequence is Trigger factor (469 aa).

The 86-residue stretch at Gly165–Leu250 folds into the PPIase FKBP-type domain. Over residues Glu439 to Pro460 the composition is skewed to basic and acidic residues. The disordered stretch occupies residues Glu439 to Gly469.

This sequence belongs to the FKBP-type PPIase family. Tig subfamily.

Its subcellular location is the cytoplasm. It catalyses the reaction [protein]-peptidylproline (omega=180) = [protein]-peptidylproline (omega=0). Its function is as follows. Involved in protein export. Acts as a chaperone by maintaining the newly synthesized protein in an open conformation. Functions as a peptidyl-prolyl cis-trans isomerase. The polypeptide is Trigger factor (Bartonella quintana (strain Toulouse) (Rochalimaea quintana)).